Consider the following 1454-residue polypeptide: ABC transporter G family member 39 (1454 aa).

The ABC transporter 1 domain occupies 175–448 (LGFFHLLPSK…FEYFGFQCPE (274 aa)). 208–215 (GPPSSGKT) is a binding site for ATP. Positions 526-739 (ELFKACFDRE…GQTAIVMNEF (214 aa)) constitute an ABC transmembrane type-2 1 domain. 7 helical membrane-spanning segments follow: residues 544 to 564 (FVYV…MTVY), 584 to 604 (MFFS…FTVM), 623 to 643 (FALP…GIWI), 663 to 683 (LLAY…LGAI), 689 to 709 (ISNS…GFII), 716 to 736 (PWMT…AIVM), and 775 to 795 (FWIC…FYIL). A compositionally biased stretch (basic and acidic residues) spans 812 to 824 (EEGKDKQKGENRG). Positions 812–838 (EEGKDKQKGENRGTEGSVVELNSSSNK) are disordered. Residues 853-1106 (LAFNNVNYYV…LVEYFEAVEG (254 aa)) form the ABC transporter 2 domain. 898 to 905 (GVSGAGKT) contacts ATP. The ABC transmembrane type-2 2 domain occupies 1178 to 1392 (TQTKACFWKQ…TLYGLITSQV (215 aa)). Helical transmembrane passes span 1199–1219 (AIRF…FWQI), 1231–1251 (NFFG…AATV), 1285–1303 (IMYN…YSMI), 1312–1332 (FLWF…YGMM), 1342–1362 (IAGI…GFLI), 1367–1387 (IPIW…LYGL), and 1423–1443 (FLPV…FVFA).

This sequence belongs to the ABC transporter superfamily. ABCG family. PDR (TC 3.A.1.205) subfamily.

The protein localises to the membrane. Its function is as follows. May be a general defense protein. This chain is ABC transporter G family member 39 (ABCG39), found in Arabidopsis thaliana (Mouse-ear cress).